A 251-amino-acid polypeptide reads, in one-letter code: Zinc import ATP-binding protein ZnuC (251 aa).

The ABC transporter domain occupies 5 to 220 (VSLENVSVSF…PEFISMFGPR (216 aa)). 37–44 (GPNGAGKS) serves as a coordination point for ATP.

Belongs to the ABC transporter superfamily. Zinc importer (TC 3.A.1.15.5) family. In terms of assembly, the complex is composed of two ATP-binding proteins (ZnuC), two transmembrane proteins (ZnuB) and a solute-binding protein (ZnuA).

It localises to the cell inner membrane. It carries out the reaction Zn(2+)(out) + ATP(in) + H2O(in) = Zn(2+)(in) + ADP(in) + phosphate(in) + H(+)(in). Functionally, part of the ABC transporter complex ZnuABC involved in zinc import. Responsible for energy coupling to the transport system. Seems to be important for the virulence. This is Zinc import ATP-binding protein ZnuC from Salmonella typhimurium (strain LT2 / SGSC1412 / ATCC 700720).